Consider the following 177-residue polypeptide: B-phycoerythrin beta chain (177 aa).

Residues Cys50 and Cys61 each coordinate (2R,3E)-phycoerythrobilin. Asn72 carries the N4-methylasparagine modification. Cys82 and Cys158 together coordinate (2R,3E)-phycoerythrobilin.

This sequence belongs to the phycobiliprotein family. Heterotetramer of one alpha-1, one alpha-2, and two beta chains. Contains three covalently linked bilin chromophores.

Its subcellular location is the plastid. It localises to the chloroplast thylakoid membrane. Functionally, light-harvesting photosynthetic bile pigment-protein from the phycobiliprotein complex. The protein is B-phycoerythrin beta chain (cpeB) of Guillardia theta (Cryptophyte).